The chain runs to 335 residues: MDNSTQKDQHSGKKYSRKANKVQKGFTAAYPTQSSIPYKYQPLIIPESEKKGFNSQAKRFYHKQDDIPGPGFYNVIHQSPVFDSVSLSKKGTCTFPSMCARLDTIVSKFPAANAYTIPSRLVSKKDFSNSCSSMFQLPSYEKVLKFETPAPNQYNASDSCCKQANNVCARAGFVSKTQRGLFTVSKTGPAPGHYDVNESLVKQSPKILMSCFKSKTDRGLKLTSTGPGPGYYNPNGHPKVQKKTLIPRNPILNFSAQPLPLPPKPPLPGPGQYEIVDYTGPRKHFISSASFVSNTRRWTAGPSQPGMPGPATYRPEFPGKQSFLYNEDNKWIPVL.

Residues Met-1–Ser-11 show a composition bias toward basic and acidic residues. Positions Met-1–Asn-20 are disordered. 7 STPGR repeats span residues Pro-68–Val-75, Pro-110–Pro-118, Pro-149–Ala-156, Gly-188–Lys-215, Gly-226–Ser-255, Leu-267–His-284, and Pro-308–Phe-317. At Tyr-73 the chain carries Phosphotyrosine.

It belongs to the STPG1 family.

The protein resides in the cytoplasm. The protein localises to the nucleus. Its function is as follows. May positively contribute to the induction of apoptosis triggered by O(6)-methylguanine. This is O(6)-methylguanine-induced apoptosis 2 (STPG1) from Bos taurus (Bovine).